The primary structure comprises 752 residues: MMLSLGSDATVLPFHAKNLKFTPKLSTLNGDLAFSKGLGVGRLNCGSVRLNHKQHVRAVGKSFGADENGDGSEDDVVNATIEKSKKVLALQRELIQQIAERKKLVSSIDSDSIPGLEGNGVSYESSEKSLSRDSNPQKGSSSSGSAVETKRWHCFQQLCRSKETETWAVSSVGINQGFDEIEKKNDAVKASSKLHFNEQIKNKLYERPDTKDISSSIRTSSLKFENFEGANEPSSKEVANEAENFESGGEKPPPLAGTNVMNIILVSAECAPWSKTGGLGDVAGSLPKALARRGHRVMIVAPHYGNYAEAHDIGVRKRYKVAGQDMEVTYFHTYIDGVDIVFIDSPIFRNLESNIYGGNRLDILRRMVLFCKAAVEVPWHVPCGGICYGDGNLVFIANDWHTALLPVYLKAYYRDHGLMNYTRSVLVIHNIAHQGRGPVEDFNTVDLSGNYLDLFKMYDPVGGEHFNIFAAGLKTADRIVTVSHGYAWELKTSEGGWGLHNIINESDWKFRGIVNGVDTKDWNPQFDAYLTSDGYTNYNLKTLQTGKRQCKAALQRELGLPVREDVPIISFIGRLDHQKGVDLIAEAIPWMMSHDVQLVMLGTGRADLEQMLKEFEAQHCDKIRSWVGFSVKMAHRITAGSDILLMPSRFEPCGLNQLYAMSYGTVPVVHGVGGLRDTVQPFNPFDESGVGWTFDRAEANKLMAALWNCLLTYKDYKKSWEGIQERGMSQDLSWDNAAQQYEEVLVAAKYQW.

The N-terminal 57 residues, M1 to R57, are a transit peptide targeting the chloroplast. Disordered stretches follow at residues L116 to A146 and F224 to P253. Residue K275 coordinates ADP-alpha-D-glucose.

It belongs to the glycosyltransferase 1 family. Bacterial/plant glycogen synthase subfamily. In terms of tissue distribution, widely expressed.

The protein resides in the plastid. It localises to the chloroplast. The protein localises to the amyloplast. It catalyses the reaction [(1-&gt;4)-alpha-D-glucosyl](n) + ADP-alpha-D-glucose = [(1-&gt;4)-alpha-D-glucosyl](n+1) + ADP + H(+). Its pathway is glycan biosynthesis; starch biosynthesis. This chain is Granule-bound starch synthase 2, chloroplastic/amyloplastic, found in Pisum sativum (Garden pea).